Here is a 286-residue protein sequence, read N- to C-terminus: Bifunctional protein FolD (286 aa).

NADP(+) is bound by residues 164–166 (GAS), Ile-189, and Ile-230.

Belongs to the tetrahydrofolate dehydrogenase/cyclohydrolase family. In terms of assembly, homodimer.

It carries out the reaction (6R)-5,10-methylene-5,6,7,8-tetrahydrofolate + NADP(+) = (6R)-5,10-methenyltetrahydrofolate + NADPH. The catalysed reaction is (6R)-5,10-methenyltetrahydrofolate + H2O = (6R)-10-formyltetrahydrofolate + H(+). It participates in one-carbon metabolism; tetrahydrofolate interconversion. In terms of biological role, catalyzes the oxidation of 5,10-methylenetetrahydrofolate to 5,10-methenyltetrahydrofolate and then the hydrolysis of 5,10-methenyltetrahydrofolate to 10-formyltetrahydrofolate. In Wolinella succinogenes (strain ATCC 29543 / DSM 1740 / CCUG 13145 / JCM 31913 / LMG 7466 / NCTC 11488 / FDC 602W) (Vibrio succinogenes), this protein is Bifunctional protein FolD.